The chain runs to 190 residues: 3-isopropylmalate dehydratase small subunit (190 aa).

This sequence belongs to the LeuD family. LeuD type 1 subfamily. Heterodimer of LeuC and LeuD.

It catalyses the reaction (2R,3S)-3-isopropylmalate = (2S)-2-isopropylmalate. Its pathway is amino-acid biosynthesis; L-leucine biosynthesis; L-leucine from 3-methyl-2-oxobutanoate: step 2/4. Its function is as follows. Catalyzes the isomerization between 2-isopropylmalate and 3-isopropylmalate, via the formation of 2-isopropylmaleate. The polypeptide is 3-isopropylmalate dehydratase small subunit (Staphylococcus aureus (strain MRSA252)).